The chain runs to 342 residues: tRNA N6-adenosine threonylcarbamoyltransferase (342 aa).

Positions 111 and 115 each coordinate Fe cation. Residues 133–137, aspartate 166, glycine 179, aspartate 183, and asparagine 273 contribute to the substrate site; that span reads VVSGG. A Fe cation-binding site is contributed by aspartate 301.

It belongs to the KAE1 / TsaD family. Requires Fe(2+) as cofactor.

It is found in the cytoplasm. The enzyme catalyses L-threonylcarbamoyladenylate + adenosine(37) in tRNA = N(6)-L-threonylcarbamoyladenosine(37) in tRNA + AMP + H(+). Its function is as follows. Required for the formation of a threonylcarbamoyl group on adenosine at position 37 (t(6)A37) in tRNAs that read codons beginning with adenine. Is involved in the transfer of the threonylcarbamoyl moiety of threonylcarbamoyl-AMP (TC-AMP) to the N6 group of A37, together with TsaE and TsaB. TsaD likely plays a direct catalytic role in this reaction. The sequence is that of tRNA N6-adenosine threonylcarbamoyltransferase from Trichlorobacter lovleyi (strain ATCC BAA-1151 / DSM 17278 / SZ) (Geobacter lovleyi).